Consider the following 220-residue polypeptide: Claudin-24 (220 aa).

Residues Met1 to Gln10 lie on the Cytoplasmic side of the membrane. The helical transmembrane segment at Ser11–Pro31 threads the bilayer. Residues His32–Arg81 lie on the Extracellular side of the membrane. The chain crosses the membrane as a helical span at residues Ile82–Leu102. Topologically, residues Asp103–Arg117 are cytoplasmic. Residues Leu118–Ser138 traverse the membrane as a helical segment. Residues Trp139–Glu161 are Extracellular-facing. The helical transmembrane segment at Phe162–Leu182 threads the bilayer. Residues Leu183–Val220 lie on the Cytoplasmic side of the membrane.

Belongs to the claudin family.

It is found in the cell junction. Its subcellular location is the tight junction. It localises to the cell membrane. Its function is as follows. Plays a major role in tight junction-specific obliteration of the intercellular space, through calcium-independent cell-adhesion activity. The polypeptide is Claudin-24 (Homo sapiens (Human)).